A 487-amino-acid polypeptide reads, in one-letter code: MDPVVVLVLGLCCLLLLSHWKQNSGRGKLPPGPTPFPIIGNILQIDAKDISKSLTKFSERYGPVFTVYLGMKPAVVLHGYQAVKEALVDLGEEFAGRGSFPMLDKVSKGLGIVFTNGKRWKEIRRFSLMTLRNFGMGKRSIEDRVQEEARCLVEELRKTNASPCDPTFILGCAPCNVICSIIFHNRFDYKDEEFLKLLEKFNENVRILSSPWLQVCNNFPALIDYLPGSHKTLLKNSDYVKNFIMEKVKEHQKFLDVNNPRDFIDCFLIKMEQENHLEFTLESLVTTVFDLFGAGTETTSTTLRYSLLLLLKHPEVADKVQEEIERVIGRHRSPCMQDRSRMPYTDAVIHEIQRFIDLVPNNLPHTVTRDIKFRNYFIPKGTDIMTSLTSVLHDEKAFPNPKVFDPGHFLDESGNFKKSDYFMPFSAGKRICVGEALARMELFLFLTSILQNFKLQSLVEPKDLDITAVLNGFVSVPPSFQLCFIPV.

Cys-432 lines the heme pocket.

This sequence belongs to the cytochrome P450 family. Heme serves as cofactor. In terms of tissue distribution, expressed constitutively in liver, lung, testes, and kidney.

It is found in the endoplasmic reticulum membrane. Its subcellular location is the microsome membrane. The catalysed reaction is an organic molecule + reduced [NADPH--hemoprotein reductase] + O2 = an alcohol + oxidized [NADPH--hemoprotein reductase] + H2O + H(+). Cytochromes P450 are a group of heme-thiolate monooxygenases. In liver microsomes, this enzyme is involved in an NADPH-dependent electron transport pathway. It oxidizes a variety of structurally unrelated compounds, including steroids, fatty acids, and xenobiotics. This is Cytochrome P450 2C16 (CYP2C16) from Oryctolagus cuniculus (Rabbit).